The primary structure comprises 231 residues: Heptaprenylglyceryl phosphate synthase (231 aa).

Sn-glycerol 1-phosphate is bound at residue Lys12. 2 residues coordinate Mg(2+): Asp14 and Thr40. Residues 159–164 (YLEYSG), Gly189, and 209–210 (GN) contribute to the sn-glycerol 1-phosphate site.

The protein belongs to the GGGP/HepGP synthase family. Group I subfamily. In terms of assembly, homodimer. The cofactor is Mg(2+).

The catalysed reaction is sn-glycerol 1-phosphate + all-trans-heptaprenyl diphosphate = 3-heptaprenyl-sn-glycero-1-phosphate + diphosphate. Its pathway is membrane lipid metabolism; glycerophospholipid metabolism. Its function is as follows. Prenyltransferase that catalyzes in vivo the transfer of the heptaprenyl moiety of heptaprenyl pyrophosphate (HepPP; 35 carbon atoms) to the C3 hydroxyl of sn-glycerol-1-phosphate (G1P), producing heptaprenylglyceryl phosphate (HepGP). This reaction is an ether-bond-formation step in the biosynthesis of archaea-type G1P-based membrane lipids found in Bacillales. The chain is Heptaprenylglyceryl phosphate synthase from Staphylococcus haemolyticus (strain JCSC1435).